A 346-amino-acid polypeptide reads, in one-letter code: Biotin synthase (346 aa).

A Radical SAM core domain is found at 40 to 264 (NEVQVSTLLS…MMPHSHVRLS (225 aa)). Residues C55, C59, and C62 each coordinate [4Fe-4S] cluster. [2Fe-2S] cluster contacts are provided by C99, C130, C190, and R262.

The protein belongs to the radical SAM superfamily. Biotin synthase family. Homodimer. [4Fe-4S] cluster is required as a cofactor. Requires [2Fe-2S] cluster as cofactor.

It catalyses the reaction (4R,5S)-dethiobiotin + (sulfur carrier)-SH + 2 reduced [2Fe-2S]-[ferredoxin] + 2 S-adenosyl-L-methionine = (sulfur carrier)-H + biotin + 2 5'-deoxyadenosine + 2 L-methionine + 2 oxidized [2Fe-2S]-[ferredoxin]. Its pathway is cofactor biosynthesis; biotin biosynthesis; biotin from 7,8-diaminononanoate: step 2/2. In terms of biological role, catalyzes the conversion of dethiobiotin (DTB) to biotin by the insertion of a sulfur atom into dethiobiotin via a radical-based mechanism. This is Biotin synthase from Colwellia psychrerythraea (strain 34H / ATCC BAA-681) (Vibrio psychroerythus).